We begin with the raw amino-acid sequence, 312 residues long: Ribosomal RNA small subunit methyltransferase H (312 aa).

S-adenosyl-L-methionine contacts are provided by residues 33 to 35, D52, F81, D102, and Q109; that span reads GGH.

It belongs to the methyltransferase superfamily. RsmH family.

It is found in the cytoplasm. It catalyses the reaction cytidine(1402) in 16S rRNA + S-adenosyl-L-methionine = N(4)-methylcytidine(1402) in 16S rRNA + S-adenosyl-L-homocysteine + H(+). In terms of biological role, specifically methylates the N4 position of cytidine in position 1402 (C1402) of 16S rRNA. This is Ribosomal RNA small subunit methyltransferase H from Leuconostoc mesenteroides subsp. mesenteroides (strain ATCC 8293 / DSM 20343 / BCRC 11652 / CCM 1803 / JCM 6124 / NCDO 523 / NBRC 100496 / NCIMB 8023 / NCTC 12954 / NRRL B-1118 / 37Y).